The sequence spans 200 residues: NADH-quinone oxidoreductase subunit C (200 aa).

Belongs to the complex I 30 kDa subunit family. NDH-1 is composed of 14 different subunits. Subunits NuoB, C, D, E, F, and G constitute the peripheral sector of the complex.

It localises to the cell inner membrane. The catalysed reaction is a quinone + NADH + 5 H(+)(in) = a quinol + NAD(+) + 4 H(+)(out). In terms of biological role, NDH-1 shuttles electrons from NADH, via FMN and iron-sulfur (Fe-S) centers, to quinones in the respiratory chain. The immediate electron acceptor for the enzyme in this species is believed to be ubiquinone. Couples the redox reaction to proton translocation (for every two electrons transferred, four hydrogen ions are translocated across the cytoplasmic membrane), and thus conserves the redox energy in a proton gradient. The protein is NADH-quinone oxidoreductase subunit C of Burkholderia ambifaria (strain ATCC BAA-244 / DSM 16087 / CCUG 44356 / LMG 19182 / AMMD) (Burkholderia cepacia (strain AMMD)).